The chain runs to 195 residues: 3-hydroxyanthranilate 3,4-dioxygenase (195 aa).

Arginine 50 serves as a coordination point for O2. The Fe cation site is built by histidine 54, glutamate 60, and histidine 102. Glutamate 60 is a substrate binding site. Residues arginine 106 and glutamate 116 each coordinate substrate. A divalent metal cation is bound by residues cysteine 131, cysteine 136, cysteine 170, and cysteine 173.

This sequence belongs to the 3-HAO family. Fe(2+) serves as cofactor.

It is found in the cytoplasm. The catalysed reaction is 3-hydroxyanthranilate + O2 = (2Z,4Z)-2-amino-3-carboxymuconate 6-semialdehyde. Its pathway is cofactor biosynthesis; NAD(+) biosynthesis; quinolinate from L-kynurenine: step 3/3. Catalyzes the oxidative ring opening of 3-hydroxyanthranilate to 2-amino-3-carboxymuconate semialdehyde, which spontaneously cyclizes to quinolinate. This chain is 3-hydroxyanthranilate 3,4-dioxygenase (bna1), found in Aspergillus terreus (strain NIH 2624 / FGSC A1156).